We begin with the raw amino-acid sequence, 330 residues long: ADP-L-glycero-D-manno-heptose-6-epimerase (330 aa).

Residues 11–12, 32–33, Lys-39, Lys-54, 75–79, and Asn-92 contribute to the NADP(+) site; these read FI, DN, and EGACS. Catalysis depends on Tyr-139, which acts as the Proton acceptor. An NADP(+)-binding site is contributed by Lys-143. Asn-168 is a binding site for substrate. NADP(+) is bound by residues Val-169 and Lys-177. Lys-177 serves as the catalytic Proton acceptor. Substrate is bound by residues Arg-179, His-186, 200 to 203, Arg-213, and Tyr-292; that span reads FGEY.

Belongs to the NAD(P)-dependent epimerase/dehydratase family. HldD subfamily. In terms of assembly, homopentamer. Requires NADP(+) as cofactor.

It carries out the reaction ADP-D-glycero-beta-D-manno-heptose = ADP-L-glycero-beta-D-manno-heptose. It participates in nucleotide-sugar biosynthesis; ADP-L-glycero-beta-D-manno-heptose biosynthesis; ADP-L-glycero-beta-D-manno-heptose from D-glycero-beta-D-manno-heptose 7-phosphate: step 4/4. Functionally, catalyzes the interconversion between ADP-D-glycero-beta-D-manno-heptose and ADP-L-glycero-beta-D-manno-heptose via an epimerization at carbon 6 of the heptose. In Paraburkholderia xenovorans (strain LB400), this protein is ADP-L-glycero-D-manno-heptose-6-epimerase.